The chain runs to 294 residues: MGRAEMVVGPSAAAAAYHLKNEAISWWEEVNRSRAWQDRLFHVLAILYGIVSAVALVQLIRIQMRVPEYGWTTQKVFHFLNFLVNGVRSLVFAFRRDVQKLHPEIVQHILLDMPSLAFFTTYALLVLFWAEIYYQARAVSTDGLRPSFFTINGVVYVIQIILWLIIWWKPVRVLVILSKMFFAGVSLFAALGFLLYGGRLFLMLQRFPVESKGRRKKLQEVGYVTTICFSCFLIRCVMMCFNAFNKAADLDVLDHPILNLIYYLLVEILPSSLVLFILRKLPPKRGITQYHPIR.

Over 1 to 39 (MGRAEMVVGPSAAAAAYHLKNEAISWWEEVNRSRAWQDR) the chain is Extracellular. A glycan (N-linked (GlcNAc...) asparagine) is linked at Asn-31. A helical transmembrane segment spans residues 40–60 (LFHVLAILYGIVSAVALVQLI). Over 61 to 75 (RIQMRVPEYGWTTQK) the chain is Cytoplasmic. A helical membrane pass occupies residues 76-94 (VFHFLNFLVNGVRSLVFAF). Over 95 to 108 (RRDVQKLHPEIVQH) the chain is Extracellular. A helical transmembrane segment spans residues 109–129 (ILLDMPSLAFFTTYALLVLFW). Over 130 to 147 (AEIYYQARAVSTDGLRPS) the chain is Cytoplasmic. The helical transmembrane segment at 148–168 (FFTINGVVYVIQIILWLIIWW) threads the bilayer. Residues 169 to 172 (KPVR) lie on the Extracellular side of the membrane. Residues 173-193 (VLVILSKMFFAGVSLFAALGF) form a helical membrane-spanning segment. Residues 194 to 220 (LLYGGRLFLMLQRFPVESKGRRKKLQE) lie on the Cytoplasmic side of the membrane. Residues 221-241 (VGYVTTICFSCFLIRCVMMCF) traverse the membrane as a helical segment. Topologically, residues 242–256 (NAFNKAADLDVLDHP) are extracellular. The helical transmembrane segment at 257-277 (ILNLIYYLLVEILPSSLVLFI) threads the bilayer. At 278–294 (LRKLPPKRGITQYHPIR) the chain is on the cytoplasmic side.

This sequence belongs to the plant tobamovirus multiplication TOM1 protein family.

Its subcellular location is the vacuole membrane. In terms of biological role, necessary for the efficient intracellular multiplication of tobamoviruses, probably being a membrane anchor promoting the formation of the replication complex. The protein is Tobamovirus multiplication protein 3 (TOM3) of Nicotiana tabacum (Common tobacco).